We begin with the raw amino-acid sequence, 321 residues long: Lipoyl synthase (321 aa).

[4Fe-4S] cluster is bound by residues Cys68, Cys73, Cys79, Cys94, Cys98, Cys101, and Ser308. Positions 80–297 (FNHGTATFMI…KAEAMAMGFT (218 aa)) constitute a Radical SAM core domain.

It belongs to the radical SAM superfamily. Lipoyl synthase family. [4Fe-4S] cluster is required as a cofactor.

Its subcellular location is the cytoplasm. The enzyme catalyses [[Fe-S] cluster scaffold protein carrying a second [4Fe-4S](2+) cluster] + N(6)-octanoyl-L-lysyl-[protein] + 2 oxidized [2Fe-2S]-[ferredoxin] + 2 S-adenosyl-L-methionine + 4 H(+) = [[Fe-S] cluster scaffold protein] + N(6)-[(R)-dihydrolipoyl]-L-lysyl-[protein] + 4 Fe(3+) + 2 hydrogen sulfide + 2 5'-deoxyadenosine + 2 L-methionine + 2 reduced [2Fe-2S]-[ferredoxin]. It functions in the pathway protein modification; protein lipoylation via endogenous pathway; protein N(6)-(lipoyl)lysine from octanoyl-[acyl-carrier-protein]: step 2/2. Its function is as follows. Catalyzes the radical-mediated insertion of two sulfur atoms into the C-6 and C-8 positions of the octanoyl moiety bound to the lipoyl domains of lipoate-dependent enzymes, thereby converting the octanoylated domains into lipoylated derivatives. This is Lipoyl synthase from Klebsiella pneumoniae (strain 342).